The chain runs to 374 residues: uncharacterized protein (374 aa).

ATP is bound at residue 29-36 (GSLNSGKS).

Belongs to the archaeal ATPase family.

This is an uncharacterized protein from Methanocaldococcus jannaschii (strain ATCC 43067 / DSM 2661 / JAL-1 / JCM 10045 / NBRC 100440) (Methanococcus jannaschii).